The sequence spans 317 residues: Apolipoprotein E (317 aa).

The N-terminal stretch at 1–18 is a signal peptide; it reads MKVLWAALLVTFLAGCQA. Tandem repeats lie at residues 80 to 101, 102 to 123, 124 to 145, 146 to 167, 168 to 189, 190 to 211, 212 to 233, and 234 to 255. Residues 80 to 255 are 8 X 22 AA approximate tandem repeats; the sequence is TLMDETMKEL…RLDEVKEQVA (176 aa). A Methionine sulfoxide modification is found at M143. S147 carries the phosphoserine modification. An LDL and other lipoprotein receptors binding region spans residues 158–168; that stretch reads HLRKLRKRLLR. 162-165 contributes to the heparin binding site; that stretch reads LRKR. The segment at 210–290 is lipid-binding and lipoprotein association; sequence AATVGSLASQ…SWFEPLVEDM (81 aa). Residue 229–236 coordinates heparin; the sequence is GERLRARM. The interval 266–317 is homooligomerization; it reads QQISLQAEAFQARLKSWFEPLVEDMQRQWAGLVEKVQAAVGASTAPVPSDNH. The specificity for association with VLDL stretch occupies residues 278–290; sequence RLKSWFEPLVEDM.

Belongs to the apolipoprotein A1/A4/E family. In terms of assembly, homotetramer. May interact with ABCA1; functionally associated with ABCA1 in the biogenesis of HDLs. May interact with APP/A4 amyloid-beta peptide; the interaction is extremely stable in vitro but its physiological significance is unclear. May interact with MAPT. May interact with MAP2. In the cerebrospinal fluid, interacts with secreted SORL1. Interacts with PMEL; this allows the loading of PMEL luminal fragment on ILVs to induce fibril nucleation. APOE exists as multiple glycosylated and sialylated glycoforms within cells and in plasma. The extent of glycosylation and sialylation are tissue and context specific. In terms of processing, glycated in plasma VLDL. Post-translationally, phosphorylated by FAM20C in the extracellular medium.

The protein resides in the secreted. Its subcellular location is the extracellular space. It localises to the extracellular matrix. It is found in the extracellular vesicle. The protein localises to the endosome. The protein resides in the multivesicular body. Functionally, APOE is an apolipoprotein, a protein associating with lipid particles, that mainly functions in lipoprotein-mediated lipid transport between organs via the plasma and interstitial fluids. APOE is a core component of plasma lipoproteins and is involved in their production, conversion and clearance. Apolipoproteins are amphipathic molecules that interact both with lipids of the lipoprotein particle core and the aqueous environment of the plasma. As such, APOE associates with chylomicrons, chylomicron remnants, very low density lipoproteins (VLDL) and intermediate density lipoproteins (IDL) but shows a preferential binding to high-density lipoproteins (HDL). It also binds a wide range of cellular receptors including the LDL receptor/LDLR, the LDL receptor-related proteins LRP1, LRP2 and LRP8 and the very low-density lipoprotein receptor/VLDLR that mediate the cellular uptake of the APOE-containing lipoprotein particles. Finally, APOE also has a heparin-binding activity and binds heparan-sulfate proteoglycans on the surface of cells, a property that supports the capture and the receptor-mediated uptake of APOE-containing lipoproteins by cells. A main function of APOE is to mediate lipoprotein clearance through the uptake of chylomicrons, VLDLs, and HDLs by hepatocytes. APOE is also involved in the biosynthesis by the liver of VLDLs as well as their uptake by peripheral tissues ensuring the delivery of triglycerides and energy storage in muscle, heart and adipose tissues. By participating in the lipoprotein-mediated distribution of lipids among tissues, APOE plays a critical role in plasma and tissues lipid homeostasis. APOE is also involved in two steps of reverse cholesterol transport, the HDLs-mediated transport of cholesterol from peripheral tissues to the liver, and thereby plays an important role in cholesterol homeostasis. First, it is functionally associated with ABCA1 in the biogenesis of HDLs in tissues. Second, it is enriched in circulating HDLs and mediates their uptake by hepatocytes. APOE also plays an important role in lipid transport in the central nervous system, regulating neuron survival and sprouting. The chain is Apolipoprotein E (APOE) from Theropithecus gelada (Gelada baboon).